A 51-amino-acid polypeptide reads, in one-letter code: Perinerin (51 aa).

Its function is as follows. Antibacterial activity against both Gram-negative and Gram-positive bacteria. Shows marked activity against P.aeruginosa, B.megaterium, A.viridans, moderate activity against E.coli K-12, S.aureus and M.luteus, and minor activity against P.vulgaris. Antifungal activity against P.heliothis. The chain is Perinerin from Perinereis aibuhitensis (Korean lugworm).